Reading from the N-terminus, the 379-residue chain is MPTVFPDDSVGLVSPQTLHFNEPLELTSGKSLAEYDLVIETYGELNATQSNAVLICHALSGHHHAAGYHSAEDRKPGWWDSCIGPGKPIDTRRFFVVALNNLGGCNGSSGPASINPATGKVYGADFPMVTVEDWVHSQARLADRLGIRQWAAVVGGSLGGMQALQWTISYPERVRHCLCIASAPKLSAQNIAFNEVARQAILSDPEFLGGYFQEQGVIPKRGLKLARMVGHITYLSDDAMGAKFGRVLKTEKLNYDLHSVEFQVESYLRYQGEEFSTRFDANTYLLMTKALDYFDPAAAHGDDLVRTLEGVEADFCLMSFTTDWRFSPARSREIVDALIAAKKNVSYLEIDAPQGHDAFLMPIPRYLQAFSGYMNRISV.

Residues 51–360 (NAVLICHALS…DAPQGHDAFL (310 aa)) enclose the AB hydrolase-1 domain. Ser157 serves as the catalytic Nucleophile. Arg227 is a binding site for substrate. Active-site residues include Asp323 and His356. Asp357 serves as a coordination point for substrate.

It belongs to the AB hydrolase superfamily. MetX family. Homodimer.

It is found in the cytoplasm. The catalysed reaction is L-homoserine + succinyl-CoA = O-succinyl-L-homoserine + CoA. The protein operates within amino-acid biosynthesis; L-methionine biosynthesis via de novo pathway; O-succinyl-L-homoserine from L-homoserine: step 1/1. Its function is as follows. Transfers a succinyl group from succinyl-CoA to L-homoserine, forming succinyl-L-homoserine. This is Homoserine O-succinyltransferase from Pseudomonas paraeruginosa (strain DSM 24068 / PA7) (Pseudomonas aeruginosa (strain PA7)).